Reading from the N-terminus, the 357-residue chain is UPF0744 protein C106.03 (357 aa).

A Phosphoserine modification is found at serine 282.

It belongs to the UPF0744 family.

It localises to the cytoplasm. The chain is UPF0744 protein C106.03 from Schizosaccharomyces pombe (strain 972 / ATCC 24843) (Fission yeast).